The following is a 631-amino-acid chain: MSTTTLTRREQRAKAQHFIDTLEGTAFPNSKRIYVTGSQHDIRVPMREIQLSPTLIGGSKDNPQFEENEAVPVYDTSGPYGDPEVAINVQQGLAKLRQPWIDARNDSEELDDRSSAYTRERLADDGLDDLRFTGLLTPKRAKAGHRVTQLHYARQGIVTPEMEFIAIRENMGRERIRSEVLRHQHPGMNFGARLPENITPEFVRDEVAAGRAIIPANINHPESEPMIIGRNFLVKVNANIGNSAVTSSIEEEVEKLVWSTRWGADTVMDLSTGRYIHETREWILRNSPVPIGTVPIYQALEKVNGIAEDLTWEAFRDTLLEQAEQGVDYFTIHAGVLLRYVPMTAKRLTGIVSRGGSIMAKWCLSHHKENFLFEHFREICEICAAYDVSLSLGDGLRPGSIQDANDEAQFSELHTLGELTKIAWEYDVQVMIEGPGHVPMHMIQRNMTEELESCHEAPFYTLGPLTTDIAPGYDHFTSGIGAAMIGWFGCAMLCYVTPKEHLGLPNKEDVKQGLITYKIAAHAADLAKGHPGAQIRDNAMSKARFEFRWEDQFNLALDPFTARAYHDETLPQESGKVAHFCSMCGPKFCSMKISQEVRDYAAAQTIEVGMADMSESFRAKGGEIYLKREEA.

Substrate contacts are provided by residues asparagine 239, methionine 268, tyrosine 297, histidine 333, 353-355 (SRG), 394-397 (DGLR), and glutamate 433. Histidine 437 contributes to the Zn(2+) binding site. Tyrosine 460 contributes to the substrate binding site. Histidine 501 serves as a coordination point for Zn(2+). [4Fe-4S] cluster contacts are provided by cysteine 581, cysteine 584, and cysteine 589.

This sequence belongs to the ThiC family. As to quaternary structure, homodimer. The cofactor is [4Fe-4S] cluster.

The enzyme catalyses 5-amino-1-(5-phospho-beta-D-ribosyl)imidazole + S-adenosyl-L-methionine = 4-amino-2-methyl-5-(phosphooxymethyl)pyrimidine + CO + 5'-deoxyadenosine + formate + L-methionine + 3 H(+). It participates in cofactor biosynthesis; thiamine diphosphate biosynthesis. Its function is as follows. Catalyzes the synthesis of the hydroxymethylpyrimidine phosphate (HMP-P) moiety of thiamine from aminoimidazole ribotide (AIR) in a radical S-adenosyl-L-methionine (SAM)-dependent reaction. This is Phosphomethylpyrimidine synthase from Salmonella paratyphi A (strain AKU_12601).